Reading from the N-terminus, the 243-residue chain is DLANFLNCLGARVRGAGTDVIKIEGVDSLGGCLRYAVIPDRIEAGTFMVAAAATRGDVVLENVIPRHLEPLIAKLREAGVEVGEEEDRVRVRASGPLSPIDIKTMPYPGFPTDMQSQMMALLSTVPGTSVIVENIFENRFKVADELKRMGARIKVEGRLAVVEGVERLQGACVRATDLRAGAALVVAGLMAEGETRIDNVQYIDRGYFNLEQKLRMLGARIWRAPYDEKTPAQDNAVRKSALI.

Residues aspartate 113 and isoleucine 135 each coordinate UDP-N-acetyl-alpha-D-glucosamine.

It belongs to the EPSP synthase family. MurA subfamily.

The protein localises to the cytoplasm. It catalyses the reaction phosphoenolpyruvate + UDP-N-acetyl-alpha-D-glucosamine = UDP-N-acetyl-3-O-(1-carboxyvinyl)-alpha-D-glucosamine + phosphate. It participates in cell wall biogenesis; peptidoglycan biosynthesis. In terms of biological role, cell wall formation. Adds enolpyruvyl to UDP-N-acetylglucosamine. The sequence is that of UDP-N-acetylglucosamine 1-carboxyvinyltransferase (murA) from Desulfofundulus thermocisternus (Desulfotomaculum thermocisternum).